The sequence spans 558 residues: Formate--tetrahydrofolate ligase (558 aa).

65–72 (TPAGEGKT) contributes to the ATP binding site.

The protein belongs to the formate--tetrahydrofolate ligase family.

It catalyses the reaction (6S)-5,6,7,8-tetrahydrofolate + formate + ATP = (6R)-10-formyltetrahydrofolate + ADP + phosphate. It participates in one-carbon metabolism; tetrahydrofolate interconversion. This Methylobacterium nodulans (strain LMG 21967 / CNCM I-2342 / ORS 2060) protein is Formate--tetrahydrofolate ligase.